The following is a 94-amino-acid chain: MKYNVDTVRESGWYNKKEWLAVRDYVRQRDKMTCVRCGAFGAKKYEVDHIVELTWENLDDWNIALNPDNLQLLCKSCHNKKTSEYKRGKGVSLW.

It belongs to the skunalikevirus HNH endonuclease family.

Functionally, probable HNH endonuclease. The protein is Probable HNH endonuclease of Lactococcus lactis (Lactococcus lactis bacteriophage SK1).